The chain runs to 360 residues: MNIYDQLQAVEDRYEELGELLSDPEVVSDTKRFMALSKEEASTRETVAAYRQYKAIIQSIDDAEEMIKEAGGDPDIEEMAKEELKEAKAAKETYEDKLKLLLLPKDPNDDKNIILEIRGAAGGDEAALFAGDLLAMYQKFAESQGWRFEVMEASYNGVGGIKEVVAMVSGQSVYSKLKYESGAHRVQRVPVTESQGRVHTSTATVLVMPEVEEVEYDIDPKDLRIDIYHASGAGGQNVNKVATAVRIVHLPTNIKVEMQEERTQQKNRDKAMKIIRARVADHFAQIAQDEQDAERKSTIGTGDRSERIRTYNFPQNRVTDHRIGLTLQKLDTILSGKLDEIVDALVLYDQTQKLESLNNQ.

An N5-methylglutamine modification is found at Gln236. Residues 288–308 (QDEQDAERKSTIGTGDRSERI) are disordered. Residues 293–308 (AERKSTIGTGDRSERI) are compositionally biased toward basic and acidic residues.

Belongs to the prokaryotic/mitochondrial release factor family. Methylated by PrmC. Methylation increases the termination efficiency of RF1.

The protein resides in the cytoplasm. Peptide chain release factor 1 directs the termination of translation in response to the peptide chain termination codons UAG and UAA. The sequence is that of Peptide chain release factor 1 from Streptococcus equi subsp. zooepidemicus (strain H70).